The chain runs to 197 residues: 3-isopropylmalate dehydratase small subunit (197 aa).

It belongs to the LeuD family. LeuD type 1 subfamily. In terms of assembly, heterodimer of LeuC and LeuD.

The catalysed reaction is (2R,3S)-3-isopropylmalate = (2S)-2-isopropylmalate. The protein operates within amino-acid biosynthesis; L-leucine biosynthesis; L-leucine from 3-methyl-2-oxobutanoate: step 2/4. Its function is as follows. Catalyzes the isomerization between 2-isopropylmalate and 3-isopropylmalate, via the formation of 2-isopropylmaleate. The protein is 3-isopropylmalate dehydratase small subunit of Mycobacterium sp. (strain KMS).